We begin with the raw amino-acid sequence, 670 residues long: UvrABC system protein B (670 aa).

Positions 28–414 constitute a Helicase ATP-binding domain; sequence NNFKQGLQEQ…KKIPIVEQII (387 aa). 41 to 48 serves as a coordination point for ATP; sequence GATGTGKT. A Beta-hairpin motif is present at residues 94 to 117; the sequence is YYDYYQPEAYVASSDTYIEKDSKI. A Helicase C-terminal domain is found at 432 to 594; that stretch reads QMDDLYFEIK…VTPTALNKTI (163 aa). Residues 631–666 enclose the UVR domain; sequence NKEIKRLQKMMKEAAKTLDFEKAATLRDLILELEKK.

It belongs to the UvrB family. In terms of assembly, forms a heterotetramer with UvrA during the search for lesions. Interacts with UvrC in an incision complex.

The protein resides in the cytoplasm. In terms of biological role, the UvrABC repair system catalyzes the recognition and processing of DNA lesions. A damage recognition complex composed of 2 UvrA and 2 UvrB subunits scans DNA for abnormalities. Upon binding of the UvrA(2)B(2) complex to a putative damaged site, the DNA wraps around one UvrB monomer. DNA wrap is dependent on ATP binding by UvrB and probably causes local melting of the DNA helix, facilitating insertion of UvrB beta-hairpin between the DNA strands. Then UvrB probes one DNA strand for the presence of a lesion. If a lesion is found the UvrA subunits dissociate and the UvrB-DNA preincision complex is formed. This complex is subsequently bound by UvrC and the second UvrB is released. If no lesion is found, the DNA wraps around the other UvrB subunit that will check the other stand for damage. This chain is UvrABC system protein B, found in Onion yellows phytoplasma (strain OY-M).